The chain runs to 179 residues: Lipoprotein signal peptidase (179 aa).

Helical transmembrane passes span 10–30 (LFQF…AIII), 48–68 (VPVL…AFSF), 75–95 (WQHY…IFWL), and 101–121 (NAMI…GNLI). Residues Asp131 and Asp149 contribute to the active site. The helical transmembrane segment at 141-161 (HFPAFNIADSAITIGTILLLI) threads the bilayer.

It belongs to the peptidase A8 family.

The protein localises to the cell inner membrane. It catalyses the reaction Release of signal peptides from bacterial membrane prolipoproteins. Hydrolyzes -Xaa-Yaa-Zaa-|-(S,diacylglyceryl)Cys-, in which Xaa is hydrophobic (preferably Leu), and Yaa (Ala or Ser) and Zaa (Gly or Ala) have small, neutral side chains.. It functions in the pathway protein modification; lipoprotein biosynthesis (signal peptide cleavage). Functionally, this protein specifically catalyzes the removal of signal peptides from prolipoproteins. The polypeptide is Lipoprotein signal peptidase (Acinetobacter baylyi (strain ATCC 33305 / BD413 / ADP1)).